Reading from the N-terminus, the 120-residue chain is Seripauperin-24 (120 aa).

The first 20 residues, 1–20 (MVKLTSIAAGVAAIAATASA), serve as a signal peptide directing secretion.

Belongs to the SRP1/TIP1 family. Seripauperin subfamily. Post-translationally, O-glycosylated.

Its subcellular location is the secreted. The protein resides in the cell wall. Its function is as follows. Component of the cell wall. The polypeptide is Seripauperin-24 (PAU24) (Saccharomyces cerevisiae (strain ATCC 204508 / S288c) (Baker's yeast)).